The primary structure comprises 176 residues: MLQASKQWQWISCAKKNRLLLDLNEDMQLCTPYKLRQLTDSTFKNPYFSLEDAAFYEQVYQYLVQFKLWNPAQLCQISLNATAVKFQLKPVLAKSWFFEQYTGSTPSTEAVINLTSKAQSGEFLIVEHSSDASVCINLSENFQLDDNLSLVQFEAIRVLNNRVHPLLNQHIHSKIA.

The protein belongs to the ZapC family. Interacts directly with FtsZ.

The protein localises to the cytoplasm. In terms of biological role, contributes to the efficiency of the cell division process by stabilizing the polymeric form of the cell division protein FtsZ. Acts by promoting interactions between FtsZ protofilaments and suppressing the GTPase activity of FtsZ. This chain is Cell division protein ZapC, found in Pseudoalteromonas translucida (strain TAC 125).